A 432-amino-acid chain; its full sequence is Chaperone SurA (432 aa).

An N-terminal signal peptide occupies residues 1–26; that stretch reads MKKIASFCSAAVLIASSFLLNNTVQA. PpiC domains follow at residues 176–277 and 286–386; these read QTEY…KVQD and VQEV…EVTG.

The protein localises to the periplasm. The catalysed reaction is [protein]-peptidylproline (omega=180) = [protein]-peptidylproline (omega=0). In terms of biological role, chaperone involved in the correct folding and assembly of outer membrane proteins. Recognizes specific patterns of aromatic residues and the orientation of their side chains, which are found more frequently in integral outer membrane proteins. May act in both early periplasmic and late outer membrane-associated steps of protein maturation. This Idiomarina loihiensis (strain ATCC BAA-735 / DSM 15497 / L2-TR) protein is Chaperone SurA.